The following is a 402-amino-acid chain: Argininosuccinate synthase (402 aa).

9 to 17 (AYSGGLDTS) is a binding site for ATP. Tyr-86 provides a ligand contact to L-citrulline. Gly-116 is an ATP binding site. L-aspartate is bound by residues Thr-118, Asn-122, and Asp-123. Asn-122 contributes to the L-citrulline binding site. Positions 126, 174, 183, 259, and 271 each coordinate L-citrulline.

This sequence belongs to the argininosuccinate synthase family. Type 1 subfamily. As to quaternary structure, homotetramer.

It localises to the cytoplasm. It carries out the reaction L-citrulline + L-aspartate + ATP = 2-(N(omega)-L-arginino)succinate + AMP + diphosphate + H(+). The protein operates within amino-acid biosynthesis; L-arginine biosynthesis; L-arginine from L-ornithine and carbamoyl phosphate: step 2/3. The sequence is that of Argininosuccinate synthase from Anoxybacillus flavithermus (strain DSM 21510 / WK1).